Consider the following 1581-residue polypeptide: Rho guanine nucleotide exchange factor 5 (1581 aa).

6 disordered regions span residues Glu25 to His54, Val159 to Gln274, Leu316 to Ile643, Ser659 to Val700, His741 to Tyr810, and Val829 to Asp1051. Residues Gln41–His54 show a composition bias toward basic and acidic residues. Residues Lys204–Leu221 show a composition bias toward polar residues. Over residues Gly228–Glu241 the composition is skewed to acidic residues. Basic and acidic residues-rich tracts occupy residues Gln326–Val336 and Arg345–Asp380. Ser446 carries the phosphoserine modification. The segment covering Leu474 to Ile492 has biased composition (basic and acidic residues). The span at Ser496 to Arg507 shows a compositional bias: polar residues. The span at Pro515–Val531 shows a compositional bias: low complexity. Composition is skewed to polar residues over residues Thr569–Pro595, Thr603–Phe613, Phe662–Ala685, Thr748–Ser760, and Thr779–Pro791. The segment covering Val829–Pro843 has biased composition (pro residues). Composition is skewed to polar residues over residues Pro867 to Arg881, Gly889 to Val905, and Ser912 to Thr925. 2 positions are modified to phosphoserine: Ser953 and Ser969. Residues Lys975 to Glu986 are compositionally biased toward basic and acidic residues. Phosphoserine is present on residues Ser1029 and Ser1110. The DH domain maps to Lys1158–Asn1342. The 114-residue stretch at Leu1375–Leu1488 folds into the PH domain. The SH3 domain maps to Tyr1494–Asn1555.

Interacts with SRC. Forms a ternary complex with SRC and the PI3K 85 kDa subunit. Interacts with and is activated by the heterodimer formed by GNB1 and GNG2. Interacts with ODAM (via C-terminus). Interacts with RHOA. Activation of SRC induces tyrosine phosphorylation of ARHGEF5.

It localises to the nucleus. The protein localises to the cytoplasm. It is found in the cell projection. Its subcellular location is the podosome. Functionally, guanine nucleotide exchange factor which activates Rho GTPases. Strongly activates RHOA. Also strongly activates RHOB, weakly activates RHOC and RHOG and shows no effect on RHOD, RHOV, RHOQ or RAC1. Involved in regulation of cell shape and actin cytoskeletal organization. Plays a role in actin organization by generating a loss of actin stress fibers and the formation of membrane ruffles and filopodia. Required for SRC-induced podosome formation. Involved in positive regulation of immature dendritic cell migration. This Mus musculus (Mouse) protein is Rho guanine nucleotide exchange factor 5.